The following is a 1535-amino-acid chain: ABC multidrug transporter atrF (1535 aa).

Residues M1–Y115 are disordered. A glycan (N-linked (GlcNAc...) asparagine) is linked at N33. The segment covering T34–D45 has biased composition (low complexity). The segment covering A46–T76 has biased composition (basic and acidic residues). Residues S79–S93 show a composition bias toward basic residues. N-linked (GlcNAc...) asparagine glycans are attached at residues N149, N274, N287, and N351. One can recognise an ABC transporter 1 domain in the interval V185–E427. A run of 7 helical transmembrane segments spans residues L540–G560, G573–V593, V618–F638, A646–L666, A680–P700, G703–S723, and F791–V811. The segment at K834–A868 is disordered. Residues F879 to G1117 form the ABC transporter 2 domain. The N-linked (GlcNAc...) asparagine glycan is linked to N892. G915–T922 provides a ligand contact to ATP. 6 helical membrane passes run Y1212–L1232, I1246–I1266, I1295–F1315, S1320–G1340, W1342–V1362, and W1384–V1406. Residue N1459 is glycosylated (N-linked (GlcNAc...) asparagine). A run of 2 helical transmembrane segments spans residues C1477 to Y1497 and G1503 to K1523.

It belongs to the ABC transporter superfamily. ABCG family. PDR (TC 3.A.1.205) subfamily.

It is found in the cell membrane. It catalyses the reaction voriconazole(in) + ATP + H2O = voriconazole(out) + ADP + phosphate + H(+). Functionally, pleiotropic ABC efflux transporter involved in the basal level of azole susceptibility. Confers resistance to voriconazole. In Aspergillus flavus (strain ATCC 200026 / FGSC A1120 / IAM 13836 / NRRL 3357 / JCM 12722 / SRRC 167), this protein is ABC multidrug transporter atrF.